We begin with the raw amino-acid sequence, 516 residues long: Probable cytosol aminopeptidase (516 aa).

Mn(2+) contacts are provided by Lys-288 and Asp-293. The active site involves Lys-300. Residues Asp-311, Asp-370, and Glu-372 each contribute to the Mn(2+) site. Residue Arg-374 is part of the active site.

Belongs to the peptidase M17 family. It depends on Mn(2+) as a cofactor.

It localises to the cytoplasm. The enzyme catalyses Release of an N-terminal amino acid, Xaa-|-Yaa-, in which Xaa is preferably Leu, but may be other amino acids including Pro although not Arg or Lys, and Yaa may be Pro. Amino acid amides and methyl esters are also readily hydrolyzed, but rates on arylamides are exceedingly low.. It carries out the reaction Release of an N-terminal amino acid, preferentially leucine, but not glutamic or aspartic acids.. Its function is as follows. Presumably involved in the processing and regular turnover of intracellular proteins. Catalyzes the removal of unsubstituted N-terminal amino acids from various peptides. This chain is Probable cytosol aminopeptidase, found in Cupriavidus taiwanensis (strain DSM 17343 / BCRC 17206 / CCUG 44338 / CIP 107171 / LMG 19424 / R1) (Ralstonia taiwanensis (strain LMG 19424)).